Consider the following 556-residue polypeptide: Formate--tetrahydrofolate ligase (556 aa).

Residue 65-72 (TPAGEGKT) coordinates ATP.

It belongs to the formate--tetrahydrofolate ligase family.

The catalysed reaction is (6S)-5,6,7,8-tetrahydrofolate + formate + ATP = (6R)-10-formyltetrahydrofolate + ADP + phosphate. It participates in one-carbon metabolism; tetrahydrofolate interconversion. The polypeptide is Formate--tetrahydrofolate ligase (Hyphomonas neptunium (strain ATCC 15444)).